The following is a 25-amino-acid chain: Bombinin-like peptide 4 (25 aa).

Phenylalanine amide is present on Phe-25.

This sequence belongs to the bombinin family. Expressed by the skin glands.

It localises to the secreted. Its function is as follows. Has antimicrobial activity, but no hemolytic activity. Preference on killing Gram-negative non-enteric bacteria. In Bombina orientalis (Oriental fire-bellied toad), this protein is Bombinin-like peptide 4.